A 342-amino-acid chain; its full sequence is tRNA N6-adenosine threonylcarbamoyltransferase (342 aa).

2 residues coordinate Fe cation: histidine 111 and histidine 115. Substrate is bound by residues 134–138 (LVSGG), aspartate 167, glycine 180, and asparagine 277. Aspartate 305 lines the Fe cation pocket.

This sequence belongs to the KAE1 / TsaD family. The cofactor is Fe(2+).

The protein resides in the cytoplasm. It carries out the reaction L-threonylcarbamoyladenylate + adenosine(37) in tRNA = N(6)-L-threonylcarbamoyladenosine(37) in tRNA + AMP + H(+). Functionally, required for the formation of a threonylcarbamoyl group on adenosine at position 37 (t(6)A37) in tRNAs that read codons beginning with adenine. Is involved in the transfer of the threonylcarbamoyl moiety of threonylcarbamoyl-AMP (TC-AMP) to the N6 group of A37, together with TsaE and TsaB. TsaD likely plays a direct catalytic role in this reaction. The protein is tRNA N6-adenosine threonylcarbamoyltransferase of Haemophilus influenzae (strain ATCC 51907 / DSM 11121 / KW20 / Rd).